A 307-amino-acid polypeptide reads, in one-letter code: 4-hydroxythreonine-4-phosphate dehydrogenase (307 aa).

Residues histidine 126 and threonine 127 each coordinate substrate. A divalent metal cation contacts are provided by histidine 156, histidine 195, and histidine 251. 3 residues coordinate substrate: lysine 259, asparagine 268, and arginine 277.

Belongs to the PdxA family. Homodimer. Requires Zn(2+) as cofactor. The cofactor is Mg(2+). Co(2+) is required as a cofactor.

The protein resides in the cytoplasm. It catalyses the reaction 4-(phosphooxy)-L-threonine + NAD(+) = 3-amino-2-oxopropyl phosphate + CO2 + NADH. The protein operates within cofactor biosynthesis; pyridoxine 5'-phosphate biosynthesis; pyridoxine 5'-phosphate from D-erythrose 4-phosphate: step 4/5. Catalyzes the NAD(P)-dependent oxidation of 4-(phosphooxy)-L-threonine (HTP) into 2-amino-3-oxo-4-(phosphooxy)butyric acid which spontaneously decarboxylates to form 3-amino-2-oxopropyl phosphate (AHAP). This Helicobacter pylori (strain G27) protein is 4-hydroxythreonine-4-phosphate dehydrogenase.